The following is an 88-amino-acid chain: Small ribosomal subunit protein bS18B (88 aa).

It belongs to the bacterial ribosomal protein bS18 family. Part of the 30S ribosomal subunit. Forms a tight heterodimer with protein bS6.

Binds as a heterodimer with protein bS6 to the central domain of the 16S rRNA, where it helps stabilize the platform of the 30S subunit. The polypeptide is Small ribosomal subunit protein bS18B (Mycolicibacterium paratuberculosis (strain ATCC BAA-968 / K-10) (Mycobacterium paratuberculosis)).